The primary structure comprises 74 residues: Cyclin-dependent kinases regulatory subunit (74 aa).

Belongs to the CKS family. In terms of assembly, forms a homohexamer that can probably bind six kinase subunits.

Functionally, binds to the catalytic subunit of the cyclin dependent kinases Cdk1 and Cdk2, and is essential for their biological function. The protein is Cyclin-dependent kinases regulatory subunit (Cks30A) of Drosophila melanogaster (Fruit fly).